Reading from the N-terminus, the 343-residue chain is Ribosomal RNA small subunit methyltransferase C (343 aa).

Belongs to the methyltransferase superfamily. RsmC family. Monomer.

It localises to the cytoplasm. It carries out the reaction guanosine(1207) in 16S rRNA + S-adenosyl-L-methionine = N(2)-methylguanosine(1207) in 16S rRNA + S-adenosyl-L-homocysteine + H(+). In terms of biological role, specifically methylates the guanine in position 1207 of 16S rRNA in the 30S particle. The sequence is that of Ribosomal RNA small subunit methyltransferase C from Escherichia coli (strain ATCC 8739 / DSM 1576 / NBRC 3972 / NCIMB 8545 / WDCM 00012 / Crooks).